Here is a 381-residue protein sequence, read N- to C-terminus: Guanine nucleotide-binding protein G(olf) subunit alpha (381 aa).

The disordered stretch occupies residues 1-25 (MGCLGNSSKTAEDQGVDEKERREAN). Residue glycine 2 is the site of N-palmitoyl glycine attachment. The S-palmitoyl cysteine moiety is linked to residue cysteine 3. Residues 10-25 (TAEDQGVDEKERREAN) are compositionally biased toward basic and acidic residues. A G-alpha domain is found at 41–381 (ATHRLLLLGA…RMHLKQYELL (341 aa)). Positions 44 to 57 (RLLLLGAGESGKST) are G1 motif. The GTP site is built by glutamate 52, serine 53, glycine 54, lysine 55, serine 56, and threonine 57. Residue serine 56 participates in Mg(2+) binding. Threonine 178 bears the Phosphothreonine mark. The interval 183 to 191 (DLLRCRVLT) is G2 motif. 3 residues coordinate GTP: leucine 185, arginine 186, and threonine 191. Threonine 191 and aspartate 210 together coordinate Mg(2+). The tract at residues 206–215 (FHMFDVGGQR) is G3 motif. Residues glycine 213, asparagine 279, lysine 280, aspartate 282, and alanine 353 each contribute to the GTP site. The G4 motif stretch occupies residues 275–282 (ILFLNKQD). The G5 motif stretch occupies residues 351–356 (TCAVDT).

It belongs to the G-alpha family. G(s) subfamily. In terms of assembly, g proteins are composed of 3 units; alpha, beta and gamma. The alpha chain contains the guanine nucleotide binding site. Interacts with GAS2L2. Interacts (GDP-bound form) with RIC8B (via C-terminus); promoting GNAL folding and association with the plasma membrane.

It is found in the cell membrane. It catalyses the reaction GTP + H2O = GDP + phosphate + H(+). In terms of biological role, guanine nucleotide-binding protein (G protein) involved as transducer in olfactory signal transduction controlled by G protein-coupled receptors (GPCRs). Contains the guanine nucleotide binding site and alternates between an active, GTP-bound state and an inactive, GDP-bound state. Signaling by an activated GPCR promotes GDP release and GTP binding. The alpha subunit has a low GTPase activity that converts bound GTP to GDP, thereby terminating the signal. Both GDP release and GTP hydrolysis are modulated by numerous regulatory proteins. GNAL/G(olf) alpha specifically mediates olfactory signal transduction within the olfactory neuroepithelium and the basal ganglia following GPCRs activation. Acts by promoting the specific activation of adenylyl cyclase ADCY3, resulting in increased levels of the signaling molecule cAMP. In Mus musculus (Mouse), this protein is Guanine nucleotide-binding protein G(olf) subunit alpha.